A 260-amino-acid chain; its full sequence is uncharacterized protein (260 aa).

The stretch at 214-252 (IHQFIETEIERIMEAAKELKAEKKDMTSELNRLLLNTVE) forms a coiled coil.

This is an uncharacterized protein from Bacillus subtilis (strain 168).